The chain runs to 204 residues: Imidazole glycerol phosphate synthase subunit HisH 1 (204 aa).

Residues 5-204 (KVVIIDTGCA…AKLIQNFLEL (200 aa)) enclose the Glutamine amidotransferase type-1 domain. Residue Cys80 is the Nucleophile of the active site. Catalysis depends on residues His186 and Glu188.

As to quaternary structure, heterodimer of HisH and HisF.

Its subcellular location is the cytoplasm. The catalysed reaction is 5-[(5-phospho-1-deoxy-D-ribulos-1-ylimino)methylamino]-1-(5-phospho-beta-D-ribosyl)imidazole-4-carboxamide + L-glutamine = D-erythro-1-(imidazol-4-yl)glycerol 3-phosphate + 5-amino-1-(5-phospho-beta-D-ribosyl)imidazole-4-carboxamide + L-glutamate + H(+). It carries out the reaction L-glutamine + H2O = L-glutamate + NH4(+). Its pathway is amino-acid biosynthesis; L-histidine biosynthesis; L-histidine from 5-phospho-alpha-D-ribose 1-diphosphate: step 5/9. Its function is as follows. IGPS catalyzes the conversion of PRFAR and glutamine to IGP, AICAR and glutamate. The HisH subunit provides the glutamine amidotransferase activity that produces the ammonia necessary to HisF for the synthesis of IGP and AICAR. The polypeptide is Imidazole glycerol phosphate synthase subunit HisH 1 (hisH1) (Vibrio vulnificus (strain YJ016)).